The following is a 560-amino-acid chain: Membrane protein insertase YidC (560 aa).

6 helical membrane passes run 5–25 (IINL…WQYF), 334–354 (AIDF…MNFF), 357–377 (YVGN…LLMF), 431–451 (LPIL…YVTI), 476–496 (LFGL…WPIL), and 522–542 (FMPL…LIYW).

It belongs to the OXA1/ALB3/YidC family. Type 1 subfamily. As to quaternary structure, interacts with the Sec translocase complex via SecD. Specifically interacts with transmembrane segments of nascent integral membrane proteins during membrane integration.

The protein localises to the cell inner membrane. In terms of biological role, required for the insertion and/or proper folding and/or complex formation of integral membrane proteins into the membrane. Involved in integration of membrane proteins that insert both dependently and independently of the Sec translocase complex, as well as at least some lipoproteins. Aids folding of multispanning membrane proteins. In Rickettsia conorii (strain ATCC VR-613 / Malish 7), this protein is Membrane protein insertase YidC.